A 1081-amino-acid chain; its full sequence is Probable cellulose synthase A catalytic subunit 8 [UDP-forming] (1081 aa).

The Cytoplasmic portion of the chain corresponds to 1-277; the sequence is MDGDADAVKS…PSSRINPYRM (277 aa). Zn(2+) contacts are provided by C19, C22, C38, C41, C46, C49, C61, and C64. An RING-type; degenerate zinc finger spans residues 19 to 65; sequence CQICGDGVGTTAEGDVFAACDVCGFPVCRPCYEYERKDGTQACPQCK. Residues 72–148 are disordered; sequence KGSPAIRGEE…YDSGEIPRGY (77 aa). Positions 81–91 are enriched in acidic residues; the sequence is EGEDTDADDVS. Residues 103–112 show a composition bias toward basic and acidic residues; it reads QKQKIADRMR. A helical transmembrane segment spans residues 278–298; sequence VIVLRLVVLSIFLHYRITNPV. Over 299-300 the chain is Extracellular; sequence RN. A helical transmembrane segment spans residues 301-321; sequence AYPLWLLSVICEIWFALSWIL. At 322–864 the chain is on the cytoplasmic side; the sequence is DQFPKWFPIN…INTTIYPLTS (543 aa). Positions 360, 366, 367, and 396 each coordinate UDP-alpha-D-glucose. The active site involves D396. A coiled-coil region spans residues 450 to 477; the sequence is VKDRRAMKREYEEFKVRINGLVAKAQKV. A UDP-alpha-D-glucose-binding site is contributed by K537. The Mn(2+) site is built by K538 and D562. Residues 660–684 form a disordered region; sequence SLCGGRKKASKSKKKSSDKKKSNKH. The span at 664–682 shows a compositional bias: basic residues; sequence GRKKASKSKKKSSDKKKSN. Residue D781 is part of the active site. A helical transmembrane segment spans residues 865 to 885; sequence IPLLIYCVLPAICLLTGKFII. The Extracellular segment spans residues 886-890; that stretch reads PEISN. Residues 891 to 911 traverse the membrane as a helical segment; the sequence is FASIWFISLFISIFATGILEM. Residues 912–926 lie on the Cytoplasmic side of the membrane; the sequence is RWSGVGIDEWWRNEQ. Residues 927 to 947 traverse the membrane as a helical segment; that stretch reads FWVIGGISAHLFAVFQGLLKV. Over 948–977 the chain is Extracellular; sequence LAGIDTNFTVTSKASDEDGDFAELYMFKWT. An N-linked (GlcNAc...) asparagine glycan is attached at N954. Residues 978–998 traverse the membrane as a helical segment; it reads TLLIPPTTILIINLVGVVAGI. The Cytoplasmic segment spans residues 999-1009; it reads SYAINSGYQSW. The chain crosses the membrane as a helical span at residues 1010-1030; sequence GPLFGKLFFAFWVIVHLYPFL. Over 1031–1039 the chain is Extracellular; that stretch reads KGLMGRQNR. A helical membrane pass occupies residues 1040–1060; sequence TPTIVVVWAILLASIFSLLWV. The Cytoplasmic segment spans residues 1061-1081; it reads RIDPFTTRVTGPDTQTCGINC.

Belongs to the glycosyltransferase 2 family. Plant cellulose synthase subfamily. Mn(2+) serves as cofactor. Zn(2+) is required as a cofactor.

It is found in the cell membrane. The catalysed reaction is [(1-&gt;4)-beta-D-glucosyl](n) + UDP-alpha-D-glucose = [(1-&gt;4)-beta-D-glucosyl](n+1) + UDP + H(+). It functions in the pathway glycan metabolism; plant cellulose biosynthesis. Its function is as follows. Probable catalytic subunit of cellulose synthase terminal complexes ('rosettes'), required for beta-1,4-glucan microfibril crystallization, a major mechanism of the cell wall formation. This Oryza sativa subsp. japonica (Rice) protein is Probable cellulose synthase A catalytic subunit 8 [UDP-forming] (CESA8).